The chain runs to 243 residues: Mesoderm posterior protein 1 (243 aa).

Positions 1 to 86 (MAQPLCEPRS…QRQSASEREK (86 aa)) are disordered. Residues 27 to 36 (DGNSVCSPAW) are compositionally biased toward polar residues. The 55-residue stretch at 76–130 (GQRQSASEREKLRMRTLARALHELRRFLPPSVAPTGQNLTKIETLRLAIRYIGHL) folds into the bHLH domain. The CPLCP signature appears at 153–157 (CPLCP). Residues 204-228 (AETASQERQEMEPSPSSPLFSSDML) form a disordered region.

As to expression, no expression was detected in adult tissues except the testis. Expression in the testis was regulated developmentally; expressed 2 weeks after birth, and increases, reaching the full expression level in mature testes.

The protein localises to the nucleus. Its function is as follows. Transcription factor. Plays a role in the epithelialization of somitic mesoderm and in the development of cardiac mesoderm. Defines the rostrocaudal patterning of the somites by participating in distinct Notch pathways. The chain is Mesoderm posterior protein 1 (Mesp1) from Mus musculus (Mouse).